Reading from the N-terminus, the 398-residue chain is 1-deoxy-D-xylulose 5-phosphate reductoisomerase (398 aa).

Residues Thr11, Gly12, Ser13, Ile14, Arg38, Asn39, and Asn125 each coordinate NADPH. Lys126 provides a ligand contact to 1-deoxy-D-xylulose 5-phosphate. An NADPH-binding site is contributed by Glu127. Mn(2+) is bound at residue Asp151. 4 residues coordinate 1-deoxy-D-xylulose 5-phosphate: Ser152, Glu153, Ser179, and His202. Glu153 is a Mn(2+) binding site. Gly208 provides a ligand contact to NADPH. 1-deoxy-D-xylulose 5-phosphate is bound by residues Ser215, Asn220, Lys221, and Glu224. Glu224 is a Mn(2+) binding site.

This sequence belongs to the DXR family. Requires Mg(2+) as cofactor. Mn(2+) is required as a cofactor.

It catalyses the reaction 2-C-methyl-D-erythritol 4-phosphate + NADP(+) = 1-deoxy-D-xylulose 5-phosphate + NADPH + H(+). Its pathway is isoprenoid biosynthesis; isopentenyl diphosphate biosynthesis via DXP pathway; isopentenyl diphosphate from 1-deoxy-D-xylulose 5-phosphate: step 1/6. Functionally, catalyzes the NADPH-dependent rearrangement and reduction of 1-deoxy-D-xylulose-5-phosphate (DXP) to 2-C-methyl-D-erythritol 4-phosphate (MEP). The protein is 1-deoxy-D-xylulose 5-phosphate reductoisomerase of Burkholderia multivorans (strain ATCC 17616 / 249).